The chain runs to 214 residues: Neuromodulin (214 aa).

A disordered region spans residues 1-214 (MLCCMRRTKQ…EEAKPDQENA (214 aa)). Residues cysteine 3 and cysteine 4 are each lipidated (S-palmitoyl cysteine). 3 stretches are compositionally biased toward basic and acidic residues: residues 9 to 33 (KQVE…DKAH), 52 to 88 (MKDD…KTEE), and 95 to 122 (LEVK…KDTP). Residues 32–61 (AHKAATKIQASFRGHIIRKKMKDDKKDDNS) enclose the IQ domain. The span at 124-133 (EENQASAESE) shows a compositional bias: low complexity. Basic and acidic residues-rich tracts occupy residues 150-160 (QAKEESKKADV), 168-193 (ASEK…EIKA), and 205-214 (EEAKPDQENA).

Belongs to the neuromodulin family. Binds calmodulin with a greater affinity in the absence of Ca(2+) than in its presence. Palmitoylated. Palmitoylation is essential for plasma membrane association.

The protein resides in the cell membrane. The protein localises to the cell projection. It localises to the growth cone membrane. Its subcellular location is the synapse. It is found in the filopodium membrane. This protein is associated with nerve growth. It is a major component of the motile 'growth cones' that form the tips of elongating axons. Plays a role in axonal and dendritic filopodia induction. The polypeptide is Neuromodulin (gap43) (Xenopus laevis (African clawed frog)).